Reading from the N-terminus, the 447-residue chain is Phosphoglucosamine mutase (447 aa).

Catalysis depends on S102, which acts as the Phosphoserine intermediate. 4 residues coordinate Mg(2+): S102, D241, D243, and D245. Residue S102 is modified to Phosphoserine.

Belongs to the phosphohexose mutase family. Mg(2+) is required as a cofactor. In terms of processing, activated by phosphorylation.

It catalyses the reaction alpha-D-glucosamine 1-phosphate = D-glucosamine 6-phosphate. Its function is as follows. Catalyzes the conversion of glucosamine-6-phosphate to glucosamine-1-phosphate. The protein is Phosphoglucosamine mutase of Delftia acidovorans (strain DSM 14801 / SPH-1).